Consider the following 269-residue polypeptide: Chymotrypsin-like elastase family member 2A (269 aa).

The signal sequence occupies residues methionine 1–serine 16. Residues cysteine 17–arginine 28 constitute a propeptide, activation peptide. Positions valine 29–glutamate 267 constitute a Peptidase S1 domain. A disulfide bridge links cysteine 58 with cysteine 74. Residues histidine 73 and aspartate 121 each act as charge relay system in the active site. 3 disulfides stabilise this stretch: cysteine 155/cysteine 222, cysteine 186/cysteine 202, and cysteine 212/cysteine 243. Residue serine 216 is the Charge relay system of the active site.

Belongs to the peptidase S1 family. Elastase subfamily. Interacts with CPA1. Interacts with SERPINA1. In terms of tissue distribution, pancreas.

The protein resides in the secreted. It carries out the reaction Preferential cleavage: Leu-|-Xaa, Met-|-Xaa and Phe-|-Xaa. Hydrolyzes elastin.. Functionally, elastase that enhances insulin signaling and might have a physiologic role in cellular glucose metabolism. Circulates in plasma and reduces platelet hyperactivation, triggers both insulin secretion and degradation, and increases insulin sensitivity. The polypeptide is Chymotrypsin-like elastase family member 2A (CELA2A) (Bos taurus (Bovine)).